A 214-amino-acid polypeptide reads, in one-letter code: Avenin (214 aa).

A signal peptide spans 1-28 (MKIFFFLALLALVVSATFAQYAESDGSY). The interval 180 to 214 (RGQESGVFTPKFTQTSFQPYPEGEDESSLINKASE) is disordered.

Seed storage protein. This chain is Avenin, found in Avena sativa (Oat).